A 95-amino-acid chain; its full sequence is Antitoxin VapB41 (95 aa).

Antitoxin component of a type II toxin-antitoxin (TA) system. The sequence is that of Antitoxin VapB41 (vapB41) from Mycobacterium tuberculosis (strain CDC 1551 / Oshkosh).